The sequence spans 532 residues: Probable pectinesterase/pectinesterase inhibitor 39 (532 aa).

A signal peptide spans 1 to 34 (MINNHPIREKPKHIIFNLLSLIFFLIFLSTVVSS). Residues 35–169 (QSPSYTTHKT…ENLKEIILDI (135 aa)) form a pectinesterase inhibitor 39 region. Residues N62, N74, N85, N172, N221, N231, N244, and N287 are each glycosylated (N-linked (GlcNAc...) asparagine). A pectinesterase 39 region spans residues 221–518 (NLSVAIDGTG…FTVGPFIDGS (298 aa)). Substrate-binding residues include T296 and Q326. The active-site Proton donor; for pectinesterase activity is the D349. D370 serves as the catalytic Nucleophile; for pectinesterase activity. N382 and N404 each carry an N-linked (GlcNAc...) asparagine glycan. Residues R438 and W440 each coordinate substrate. 2 N-linked (GlcNAc...) asparagine glycosylation sites follow: N502 and N522.

The protein in the N-terminal section; belongs to the PMEI family. This sequence in the C-terminal section; belongs to the pectinesterase family. As to expression, expressed in siliques but not in flower buds.

It is found in the secreted. Its subcellular location is the cell wall. The catalysed reaction is [(1-&gt;4)-alpha-D-galacturonosyl methyl ester](n) + n H2O = [(1-&gt;4)-alpha-D-galacturonosyl](n) + n methanol + n H(+). It functions in the pathway glycan metabolism; pectin degradation; 2-dehydro-3-deoxy-D-gluconate from pectin: step 1/5. In terms of biological role, acts in the modification of cell walls via demethylesterification of cell wall pectin. This is Probable pectinesterase/pectinesterase inhibitor 39 (PME39) from Arabidopsis thaliana (Mouse-ear cress).